The primary structure comprises 146 residues: Hemoglobin subunit beta (146 aa).

V1 carries the N-acetylvaline modification. Residues 2-146 (HLTAEEKSLV…VANALAHKYH (145 aa)) form the Globin domain. S44 is modified (phosphoserine). K59 carries the N6-acetyllysine modification. Residue H63 coordinates heme b. Residue K82 is modified to N6-acetyllysine. H92 lines the heme b pocket. At C93 the chain carries S-nitrosocysteine. K144 bears the N6-acetyllysine mark.

Belongs to the globin family. As to quaternary structure, heterotetramer of two alpha chains and two beta chains. As to expression, red blood cells.

Functionally, involved in oxygen transport from the lung to the various peripheral tissues. The chain is Hemoglobin subunit beta (HBB) from Canis latrans (Coyote).